A 418-amino-acid chain; its full sequence is Tyrosine--tRNA ligase (418 aa).

Tyr-34 is a binding site for L-tyrosine. Positions 39-48 (PTADSLHLGH) match the 'HIGH' region motif. Residues Tyr-169 and Gln-173 each coordinate L-tyrosine. A 'KMSKS' region motif is present at residues 229–233 (KFGKS). Lys-232 serves as a coordination point for ATP. An S4 RNA-binding domain is found at 352 to 418 (LNLVDMLVTA…GKKKYAVLTY (67 aa)).

It belongs to the class-I aminoacyl-tRNA synthetase family. TyrS type 1 subfamily. As to quaternary structure, homodimer.

It localises to the cytoplasm. The enzyme catalyses tRNA(Tyr) + L-tyrosine + ATP = L-tyrosyl-tRNA(Tyr) + AMP + diphosphate + H(+). Its function is as follows. Catalyzes the attachment of tyrosine to tRNA(Tyr) in a two-step reaction: tyrosine is first activated by ATP to form Tyr-AMP and then transferred to the acceptor end of tRNA(Tyr). This chain is Tyrosine--tRNA ligase, found in Streptococcus pyogenes serotype M5 (strain Manfredo).